The sequence spans 419 residues: MKSKRQALSPLQLMEQTYDVVNFHPGGAEIIENYQGRDATDAFMVMHFQEAFDKLKRMPKINPSFELPPQAAVNEAQEDFRKLREELIATGMFDASPLWYSYKISTTLGLGVLGYFLMVQYQMYFIGAVLLGMHYQQMGWLSHDICHHQTFKNRNWNNLVGLVFGNGLQGFSVTCWKDRHNAHHSATNVQGHDPDIDNLPPLAWSEDDVTRASPISRKLIQFQQYYFLVICILLRFIWCFQCVLTVRSLKDRDNQFYRSQYKKEAIGLALHWTLKALFHLFFMPSILTSLLVFFVSELVGGFGIAIVVFMNHYPLEKIGDPVWDGHGFSVGQIHETMNIRRGIITDWFFGGLNYQIEHHLWPTLPRHNLTAVSYQVEQLCQKHNLPYRNPLPHEGLVILLRYLAVFARMAEKQPAGKAL.

The Cytochrome b5 heme-binding domain occupies 1–64 (MKSKRQALSP…LKRMPKINPS (64 aa)). Residues H24 and H47 each coordinate heme. A helical membrane pass occupies residues 110-130 (LGVLGYFLMVQYQMYFIGAVL). The Histidine box-1 motif lies at 143-147 (HDICH). A helical membrane pass occupies residues 156–176 (WNNLVGLVFGNGLQGFSVTCW). Positions 180–184 (HNAHH) match the Histidine box-2 motif. Transmembrane regions (helical) follow at residues 226–246 (YFLVICILLRFIWCFQCVLTV), 266–286 (IGLALHWTLKALFHLFFMPSI), and 290–310 (LLVFFVSELVGGFGIAIVVFM). Residues 355–359 (QIEHH) carry the Histidine box-3 motif.

The protein belongs to the fatty acid desaturase type 1 family. Fe cation is required as a cofactor.

The protein localises to the membrane. The enzyme catalyses an (11Z,14Z)-icosadienoyl-containing glycerolipid + 2 Fe(II)-[cytochrome b5] + O2 + 2 H(+) = an (8Z,11Z,14Z)-icosatrienoyl-containing glycerolipid + 2 Fe(III)-[cytochrome b5] + 2 H2O. The catalysed reaction is an (11Z,14Z,17Z)-icosatrienoyl-containing glycerolipid + 2 Fe(II)-[cytochrome b5] + O2 + 2 H(+) = an (8Z,11Z,14Z,17Z)-eicosatetraenoyl-containing glycerolipid + 2 Fe(III)-[cytochrome b5] + 2 H2O. It catalyses the reaction an (11Z)-eicosenoyl-containing glycerolipid + 2 Fe(II)-[cytochrome b5] + O2 + 2 H(+) = a (8Z,11Z)-eicosadienoyl-containing glycerolipid + 2 Fe(III)-[cytochrome b5] + 2 H2O. Its pathway is lipid metabolism; fatty acid metabolism. In terms of biological role, delta(8)-fatty-acid desaturase which introduces a double bond at the 8-position in 20-carbon chain length fatty acids (C20) that have an existing delta-11 unsaturation (double bond). Whether it acts on CoA-linked substrates (as in animals) or phospholipid-linked substrates (as in plants and fungi) is still not clear. This chain is Delta(8)-fatty-acid desaturase (efd1), found in Euglena gracilis.